We begin with the raw amino-acid sequence, 253 residues long: Phosphate import ATP-binding protein PstB (253 aa).

In terms of domain architecture, ABC transporter spans 7–249 (ASAKNLNLWY…PQSSKTKRYI (243 aa)). 39–46 (GPSGCGKS) serves as a coordination point for ATP.

Belongs to the ABC transporter superfamily. Phosphate importer (TC 3.A.1.7) family. The complex is composed of two ATP-binding proteins (PstB), two transmembrane proteins (PstC and PstA) and a solute-binding protein (PstS).

It is found in the cell inner membrane. It carries out the reaction phosphate(out) + ATP + H2O = ADP + 2 phosphate(in) + H(+). Functionally, part of the ABC transporter complex PstSACB involved in phosphate import. Responsible for energy coupling to the transport system. The protein is Phosphate import ATP-binding protein PstB of Ehrlichia ruminantium (strain Gardel).